The chain runs to 192 residues: Rho-related protein racC (192 aa).

GTP is bound at residue 13 to 20; the sequence is GDGAVGKT. The short motif at 35–43 is the Effector region element; the sequence is YIPTVFDNY. Residues 60–64 and 118–121 contribute to the GTP site; these read DTAGQ and TKLD. Cys-189 is subject to Cysteine methyl ester. Cys-189 carries S-geranylgeranyl cysteine lipidation. A propeptide spans 190 to 192 (removed in mature form); the sequence is IVM.

Belongs to the small GTPase superfamily. Rho family. Interacts with pakB.

Its subcellular location is the cell membrane. This Dictyostelium discoideum (Social amoeba) protein is Rho-related protein racC (racC).